Reading from the N-terminus, the 359-residue chain is MITVNVDLGDRAYPIHIGAGLIGRAELFAPHIKGSSVTVVTNTTVDPLYGDALRAALAPLGKHVSTVVLPDGEAYKNWETLNLIFDGLLGERADRKTTLVALGGGVIGDMTGFAAACYMRGVPFIQVPTTLLSQVDSSVGGKTGINHPLGKNMIGAFYQPQAVIADIGALTTLPERELAAGIAEVIKTGAIADAAFFDWIEANVDALNRRDPAALAHAVKRSCEIKASVVAADEREGGLRAILNFGHTFGHAIEAGLGYGEWLHGEAVGCGMVMAADLSVRLGLLDDASRQRLDAVIAAAHLPTRGPALGDARYMELMRVDKKAEAGAIKFILLKRFGDTLITQAPDEAVFATLAHTTR.

NAD(+)-binding positions include 71 to 76 (DGEAYK), 105 to 109 (GVIGD), 129 to 130 (TT), lysine 142, and lysine 151. Zn(2+) is bound by residues glutamate 184, histidine 247, and histidine 264.

It belongs to the sugar phosphate cyclases superfamily. Dehydroquinate synthase family. It depends on Co(2+) as a cofactor. Requires Zn(2+) as cofactor. NAD(+) serves as cofactor.

It localises to the cytoplasm. The enzyme catalyses 7-phospho-2-dehydro-3-deoxy-D-arabino-heptonate = 3-dehydroquinate + phosphate. Its pathway is metabolic intermediate biosynthesis; chorismate biosynthesis; chorismate from D-erythrose 4-phosphate and phosphoenolpyruvate: step 2/7. Functionally, catalyzes the conversion of 3-deoxy-D-arabino-heptulosonate 7-phosphate (DAHP) to dehydroquinate (DHQ). The polypeptide is 3-dehydroquinate synthase (Burkholderia multivorans (strain ATCC 17616 / 249)).